The chain runs to 488 residues: Glutamyl-tRNA(Gln) amidotransferase subunit A (488 aa).

Catalysis depends on charge relay system residues K77 and S152. S176 functions as the Acyl-ester intermediate in the catalytic mechanism.

This sequence belongs to the amidase family. GatA subfamily. In terms of assembly, heterotrimer of A, B and C subunits.

The enzyme catalyses L-glutamyl-tRNA(Gln) + L-glutamine + ATP + H2O = L-glutaminyl-tRNA(Gln) + L-glutamate + ADP + phosphate + H(+). Allows the formation of correctly charged Gln-tRNA(Gln) through the transamidation of misacylated Glu-tRNA(Gln) in organisms which lack glutaminyl-tRNA synthetase. The reaction takes place in the presence of glutamine and ATP through an activated gamma-phospho-Glu-tRNA(Gln). The sequence is that of Glutamyl-tRNA(Gln) amidotransferase subunit A from Streptococcus agalactiae serotype Ia (strain ATCC 27591 / A909 / CDC SS700).